We begin with the raw amino-acid sequence, 488 residues long: Wax ester synthase/diacylglycerol acyltransferase 8 (488 aa).

The Cytoplasmic portion of the chain corresponds to 1–195 (MKNEEEEPLS…AIFTIGSTMR (195 aa)). Residue His135 is the Proton acceptor of the active site. A helical transmembrane segment spans residues 196-214 (LIWNTLVDMFLLFATMLFL). Over 215 to 488 (KDTKTPLKGG…RGLLKEAYKV (274 aa)) the chain is Lumenal. N-linked (GlcNAc...) asparagine glycosylation is found at Asn238, Asn252, Asn353, and Asn397.

It in the N-terminal section; belongs to the long-chain O-acyltransferase family. Mostly expressed in flowers and siliques and at low levels in stems.

The protein resides in the cell membrane. The protein localises to the endoplasmic reticulum membrane. The enzyme catalyses an acyl-CoA + a 1,2-diacyl-sn-glycerol = a triacyl-sn-glycerol + CoA. The catalysed reaction is a long chain fatty alcohol + a fatty acyl-CoA = a wax ester + CoA. It participates in glycerolipid metabolism; triacylglycerol biosynthesis. Its pathway is lipid metabolism. Its function is as follows. Bifunctional wax ester synthase/diacylglycerol acyltransferase. Involved in cuticular wax biosynthesis. The polypeptide is Wax ester synthase/diacylglycerol acyltransferase 8 (Arabidopsis thaliana (Mouse-ear cress)).